The primary structure comprises 423 residues: Glucose-1-phosphate adenylyltransferase (423 aa).

Residues Tyr-108, Gly-173, 188-189, and Ser-207 contribute to the alpha-D-glucose 1-phosphate site; that span reads EK.

Belongs to the bacterial/plant glucose-1-phosphate adenylyltransferase family. In terms of assembly, homotetramer.

It carries out the reaction alpha-D-glucose 1-phosphate + ATP + H(+) = ADP-alpha-D-glucose + diphosphate. It participates in glycan biosynthesis; glycogen biosynthesis. In terms of biological role, involved in the biosynthesis of ADP-glucose, a building block required for the elongation reactions to produce glycogen. Catalyzes the reaction between ATP and alpha-D-glucose 1-phosphate (G1P) to produce pyrophosphate and ADP-Glc. The protein is Glucose-1-phosphate adenylyltransferase of Francisella tularensis subsp. tularensis (strain WY96-3418).